Here is a 353-residue protein sequence, read N- to C-terminus: Photosystem II D2 protein (353 aa).

At threonine 2 the chain carries N-acetylthreonine. Threonine 2 carries the post-translational modification Phosphothreonine. The chain crosses the membrane as a helical span at residues 41–61; the sequence is CAYFAVGGWFTGTTFVTSWYT. Histidine 118 provides a ligand contact to chlorophyll a. The helical transmembrane segment at 125 to 141 threads the bilayer; that stretch reads GFMLRQFELARSVQLRP. Pheophytin a-binding residues include glutamine 130 and asparagine 143. Residues 153-166 traverse the membrane as a helical segment; it reads VFVSVFLIYPLGQS. Histidine 198 is a binding site for chlorophyll a. A helical membrane pass occupies residues 208-228; it reads AALLCAIHGATVENTLFEDGD. 2 residues coordinate a plastoquinone: histidine 215 and phenylalanine 262. Histidine 215 is a Fe cation binding site. Histidine 269 is a binding site for Fe cation. Residues 279 to 295 form a helical membrane-spanning segment; that stretch reads GLWMSALGVVGLALNLR.

The protein belongs to the reaction center PufL/M/PsbA/D family. As to quaternary structure, PSII is composed of 1 copy each of membrane proteins PsbA, PsbB, PsbC, PsbD, PsbE, PsbF, PsbH, PsbI, PsbJ, PsbK, PsbL, PsbM, PsbT, PsbX, PsbY, PsbZ, Psb30/Ycf12, at least 3 peripheral proteins of the oxygen-evolving complex and a large number of cofactors. It forms dimeric complexes. It depends on The D1/D2 heterodimer binds P680, chlorophylls that are the primary electron donor of PSII, and subsequent electron acceptors. It shares a non-heme iron and each subunit binds pheophytin, quinone, additional chlorophylls, carotenoids and lipids. There is also a Cl(-1) ion associated with D1 and D2, which is required for oxygen evolution. The PSII complex binds additional chlorophylls, carotenoids and specific lipids. as a cofactor.

It localises to the plastid. It is found in the chloroplast thylakoid membrane. The enzyme catalyses 2 a plastoquinone + 4 hnu + 2 H2O = 2 a plastoquinol + O2. Functionally, photosystem II (PSII) is a light-driven water:plastoquinone oxidoreductase that uses light energy to abstract electrons from H(2)O, generating O(2) and a proton gradient subsequently used for ATP formation. It consists of a core antenna complex that captures photons, and an electron transfer chain that converts photonic excitation into a charge separation. The D1/D2 (PsbA/PsbD) reaction center heterodimer binds P680, the primary electron donor of PSII as well as several subsequent electron acceptors. D2 is needed for assembly of a stable PSII complex. This chain is Photosystem II D2 protein, found in Cicer arietinum (Chickpea).